The chain runs to 365 residues: WAT1-related protein At1g01070 (365 aa).

10 consecutive transmembrane segments (helical) span residues 14-34 (YSPV…NALV), 46-66 (VIGA…AYVL), 83-103 (FVSG…GLSY), 107-127 (TVSC…ALIF), 139-159 (AGML…FLTF), 189-209 (WLLG…WMLF), 221-241 (YSST…LSLY), 255-275 (FVIT…TVAT), 285-305 (VFAS…DFLI), and 310-330 (LYLG…MFLW). Positions 27–157 (MGSVNALVKK…LICISGALFL (131 aa)) constitute an EamA 1 domain. In terms of domain architecture, EamA 2 spans 223–329 (STCLMSIFAA…VTITGLYMFL (107 aa)). Residues 340-356 (TALSSGMDNEAQYTTPN) are compositionally biased toward polar residues. The interval 340-365 (TALSSGMDNEAQYTTPNKDNDSKSPV) is disordered.

This sequence belongs to the drug/metabolite transporter (DMT) superfamily. Plant drug/metabolite exporter (P-DME) (TC 2.A.7.4) family.

It localises to the membrane. This is WAT1-related protein At1g01070 from Arabidopsis thaliana (Mouse-ear cress).